The primary structure comprises 2327 residues: Nonribosomal peptide synthetase apmB (2327 aa).

The adenylation 1 stretch occupies residues 214–605 (DTQAKSRPDS…GRKDMQIKLR (392 aa)). The region spanning 734 to 810 (EPATATGKVL…EMADACTKVI (77 aa)) is the Carrier 1 domain. O-(pantetheine 4'-phosphoryl)serine is present on Ser-771. Residues 845-1259 (EDLYPCTAMQ…IFISSKDQES (415 aa)) form a condensation 1 region. Residues 1281 to 1675 (ERIAERPDHE…RRKDTQVKLR (395 aa)) form an adenylation 2 region. Positions 1816 to 1892 (PPTTDMQITM…AISAVAETLS (77 aa)) constitute a Carrier 2 domain. Ser-1853 bears the O-(pantetheine 4'-phosphoryl)serine mark. The condensation 2 stretch occupies residues 1937-2260 (TDFQSLAING…VFQYQDFGGE (324 aa)). The tract at residues 2299–2327 (RVDLPRRPSPAGDTRDGPTAASDSPSRAR) is disordered.

It belongs to the NRP synthetase family.

It carries out the reaction N-benzoyl-L-phenylalaninol + benzoate + L-phenylalanine + 2 ATP = asperphenamate + 2 AMP + 2 diphosphate + H(+). The protein operates within secondary metabolite biosynthesis. Its function is as follows. Nonribosomal peptide synthetase; part of the gene cluster that mediates the biosynthesis of asperphenamate, a rare linear amino acid ester that exhibits antitumor activity towards a number of cell lines. The structure of asperphenamate contains two subunits, N-benzoylphenylalanine and N-benzoylphenylalaninol, which are connected by an inter-molecular ester bond. The first step of asperphenamate biosynthesis is the generation of N-benzoylphenylalaninol by the nonribosomal peptide synthase apmA. Using phenylalanine and benzoic acid as substrates, apmA catalyzes amide bond formation and tethers the intermediate into the NRPS chain. Then, the terminal R domain of apmA catalyzes the reduction reaction to get the shunt product N-benzoylphenylalaninol. Subsequently, the nonribosomal peptide synthase apmB activates the same substrates as does apmA (phenylalanine and benzoic acid) to produce N-benzoylphenylalanine before condensing N-benzoylphenylalanine and N-benzoylphenylalaninol to release asperphenamate. The sequence is that of Nonribosomal peptide synthetase apmB from Penicillium brevicompactum.